Consider the following 502-residue polypeptide: MDESKKISLGQFFTPTHIVKYMIGLMTKNKNASILEPSSGNGVFLDSLIQLGYTNLTSYEIDGDIISHPFVINSSFITSYDKPQYDSIIGNPPYVRWKNLSELQKKELKDNSIWKMYCNSLCDYFYIFIIKSILQLKVGGELIFICPDYFFSTKNAEGLRKFLINNGSFEKIILFNESKVFHGVSSSVVIFKYIKGKNIDNINIINIDSKSPIKSEDIESLGESYYIPRFSSSDVWVTSPNHIKVALDKFESYCKTIKKVQQKSLFDDLSFLDKAFQMNDINYSELELLNSICVAKAKHLDAFCFSGYTRYKLILDDNNEDKLITYFPNFFYEFNNYKDYLLKRYSYNKYLPYWEVAFLRNFSLFSKNEKKIFVPCKERISKKSNFRFSLVDEFIYPTQDVTALYKKENVKESIEYITAYLNSKAVFLWMKYKGVVKGNVVEFSEKPLTNIPFRRIDWQLKSEKKIHDDITNLVRKYLSNKEFSILHEINLNLEKLGIKVEI.

This sequence belongs to the N(4)/N(6)-methyltransferase family.

It catalyses the reaction a 2'-deoxyadenosine in DNA + S-adenosyl-L-methionine = an N(6)-methyl-2'-deoxyadenosine in DNA + S-adenosyl-L-homocysteine + H(+). Functionally, a gamma subtype methylase that recognizes the double-stranded sequence 5'-GTYRAC-3', methylates A-5 on both strands, and protects the DNA from cleavage by the HincII endonuclease. The sequence is that of Type II methyltransferase M.HincII from Haemophilus influenzae.